Here is a 229-residue protein sequence, read N- to C-terminus: NAD(P)H-hydrate epimerase (229 aa).

The YjeF N-terminal domain occupies 10-217; the sequence is AINVDLELFN…ALQRKYELNL (208 aa). (6S)-NADPHX is bound at residue 60 to 64; that stretch reads NNGGD. K(+)-binding residues include Asn61 and Asp125. (6S)-NADPHX is bound by residues 129 to 135 and Asp158; that span reads GFSFKPP. Position 161 (Ser161) interacts with K(+).

Belongs to the NnrE/AIBP family. K(+) is required as a cofactor.

It carries out the reaction (6R)-NADHX = (6S)-NADHX. The catalysed reaction is (6R)-NADPHX = (6S)-NADPHX. Functionally, catalyzes the epimerization of the S- and R-forms of NAD(P)HX, a damaged form of NAD(P)H that is a result of enzymatic or heat-dependent hydration. This is a prerequisite for the S-specific NAD(P)H-hydrate dehydratase to allow the repair of both epimers of NAD(P)HX. This chain is NAD(P)H-hydrate epimerase, found in Drosophila virilis (Fruit fly).